Consider the following 443-residue polypeptide: Probable glycine dehydrogenase (decarboxylating) subunit 1 (443 aa).

Belongs to the GcvP family. N-terminal subunit subfamily. As to quaternary structure, the glycine cleavage system is composed of four proteins: P, T, L and H. In this organism, the P 'protein' is a heterodimer of two subunits.

It catalyses the reaction N(6)-[(R)-lipoyl]-L-lysyl-[glycine-cleavage complex H protein] + glycine + H(+) = N(6)-[(R)-S(8)-aminomethyldihydrolipoyl]-L-lysyl-[glycine-cleavage complex H protein] + CO2. The glycine cleavage system catalyzes the degradation of glycine. The P protein binds the alpha-amino group of glycine through its pyridoxal phosphate cofactor; CO(2) is released and the remaining methylamine moiety is then transferred to the lipoamide cofactor of the H protein. The polypeptide is Probable glycine dehydrogenase (decarboxylating) subunit 1 (Oleidesulfovibrio alaskensis (strain ATCC BAA-1058 / DSM 17464 / G20) (Desulfovibrio alaskensis)).